The sequence spans 275 residues: Serine/threonine-protein phosphatase PGAM5, mitochondrial (275 aa).

The helical transmembrane segment at 7 to 24 (LIAGGSAAAAILGVVAAG) threads the bilayer.

It belongs to the phosphoglycerate mutase family. BPG-dependent PGAM subfamily. Post-translationally, phosphorylated by the RIPK1/RIPK3 complex under necrotic conditions. This phosphorylation increases PGAM5 phosphatase activity.

It localises to the mitochondrion outer membrane. It catalyses the reaction O-phospho-L-seryl-[protein] + H2O = L-seryl-[protein] + phosphate. It carries out the reaction O-phospho-L-threonyl-[protein] + H2O = L-threonyl-[protein] + phosphate. In terms of biological role, displays phosphatase activity for serine/threonine residues. Has apparently no phosphoglycerate mutase activity. May be regulator of mitochondrial dynamics. May be a central mediator for programmed necrosis. The sequence is that of Serine/threonine-protein phosphatase PGAM5, mitochondrial (pgam5) from Xenopus laevis (African clawed frog).